The primary structure comprises 260 residues: Fibronectin type III domain-containing protein 5 (260 aa).

Positions 1–56 are disordered; it reads MQAARGGAGRPERPGRPGRGPERERERPPGAGAASPCAAPGLPAGGATIHPGSPSA. Over residues 10-28 the composition is skewed to basic and acidic residues; sequence RPERPGRPGRGPERERERP. Over residues 29–56 the composition is skewed to low complexity; the sequence is PGAGAASPCAAPGLPAGGATIHPGSPSA. A Fibronectin type-III domain is found at 84-175; it reads APVNVTVRHL…EPVLFKTPRE (92 aa). N87 and N132 each carry an N-linked (GlcNAc...) asparagine glycan. Residues 201 to 221 traverse the membrane as a helical segment; sequence GEVLIIVVVLFMWAGVIALFC. Residues 230–241 show a composition bias toward basic and acidic residues; it reads NEPNNNKEKTKS. Positions 230 to 260 are disordered; sequence NEPNNNKEKTKSASETSTPEHQGGGLLRSKI. The segment covering 251 to 260 has biased composition (gly residues); sequence QGGGLLRSKI. The Microbody targeting signal signature appears at 258–260; sequence SKI.

As to quaternary structure, dimer; may exist in other oligomeric forms. In terms of processing, the extracellular domain is cleaved and released from the cell membrane. N-Glycosylated. As to expression, widely expressed, with highest levels in heart. Very low expression, if any, in colon, pancreas and spleen.

The protein resides in the cell membrane. It localises to the peroxisome membrane. The protein localises to the secreted. Functionally, mediates beneficial effects of muscular exercise. Induces browning of white adipose tissue by stimulating UCP1 expression, at least in part, via the nuclear receptor PPARA. In Homo sapiens (Human), this protein is Fibronectin type III domain-containing protein 5 (FNDC5).